A 361-amino-acid chain; its full sequence is Phosphoserine aminotransferase (361 aa).

Arginine 43 contributes to the L-glutamate binding site. Residues 77–78 (AS), tryptophan 103, threonine 153, aspartate 173, and glutamine 196 each bind pyridoxal 5'-phosphate. The residue at position 197 (lysine 197) is an N6-(pyridoxal phosphate)lysine. 238–239 (NT) contributes to the pyridoxal 5'-phosphate binding site.

This sequence belongs to the class-V pyridoxal-phosphate-dependent aminotransferase family. SerC subfamily. As to quaternary structure, homodimer. The cofactor is pyridoxal 5'-phosphate.

Its subcellular location is the cytoplasm. The catalysed reaction is O-phospho-L-serine + 2-oxoglutarate = 3-phosphooxypyruvate + L-glutamate. It carries out the reaction 4-(phosphooxy)-L-threonine + 2-oxoglutarate = (R)-3-hydroxy-2-oxo-4-phosphooxybutanoate + L-glutamate. The protein operates within amino-acid biosynthesis; L-serine biosynthesis; L-serine from 3-phospho-D-glycerate: step 2/3. Its pathway is cofactor biosynthesis; pyridoxine 5'-phosphate biosynthesis; pyridoxine 5'-phosphate from D-erythrose 4-phosphate: step 3/5. Functionally, catalyzes the reversible conversion of 3-phosphohydroxypyruvate to phosphoserine and of 3-hydroxy-2-oxo-4-phosphonooxybutanoate to phosphohydroxythreonine. In Pseudomonas paraeruginosa (strain DSM 24068 / PA7) (Pseudomonas aeruginosa (strain PA7)), this protein is Phosphoserine aminotransferase.